We begin with the raw amino-acid sequence, 529 residues long: uncharacterized protein (529 aa).

The region spanning 157–410 (DFPHIICEIE…FKNRVRENID (254 aa)) is the Radical SAM core domain. Residues Cys-171, Cys-176, and Cys-179 each coordinate [4Fe-4S] cluster.

Requires [4Fe-4S] cluster as cofactor.

This is an uncharacterized protein from Archaeoglobus fulgidus (strain ATCC 49558 / DSM 4304 / JCM 9628 / NBRC 100126 / VC-16).